The primary structure comprises 37 residues: Cytochrome b6-f complex subunit 5 (37 aa).

A helical transmembrane segment spans residues 5–25 (LLSGIVLGMIPITLAGLFVTA).

Belongs to the PetG family. As to quaternary structure, the 4 large subunits of the cytochrome b6-f complex are cytochrome b6, subunit IV (17 kDa polypeptide, PetD), cytochrome f and the Rieske protein, while the 4 small subunits are PetG, PetL, PetM and PetN. The complex functions as a dimer.

The protein localises to the plastid. It localises to the chloroplast thylakoid membrane. Functionally, component of the cytochrome b6-f complex, which mediates electron transfer between photosystem II (PSII) and photosystem I (PSI), cyclic electron flow around PSI, and state transitions. PetG is required for either the stability or assembly of the cytochrome b6-f complex. The polypeptide is Cytochrome b6-f complex subunit 5 (Mesostigma viride (Green alga)).